We begin with the raw amino-acid sequence, 90 residues long: DNA-binding protein HU-alpha (90 aa).

This sequence belongs to the bacterial histone-like protein family. As to quaternary structure, heterodimer of an alpha and a beta chain.

Histone-like DNA-binding protein which is capable of wrapping DNA to stabilize it, and thus to prevent its denaturation under extreme environmental conditions. The polypeptide is DNA-binding protein HU-alpha (hupA) (Vibrio cholerae serotype O1 (strain ATCC 39315 / El Tor Inaba N16961)).